Consider the following 631-residue polypeptide: Probable protein phosphatase 2C 31 (631 aa).

Disordered stretches follow at residues 119 to 142 (GPLH…SDRF) and 205 to 231 (LSGR…PKGN). Residues 131–140 (ASGSASTASD) are compositionally biased toward polar residues. Residues 221–622 (DGDYRSTPKG…DDVSIIVMSF (402 aa)) enclose the PPM-type phosphatase domain. 2 residues coordinate Mn(2+): Asp261 and Gly262. The segment at 324–347 (GGDDDPDAERKAKRGRIERNADDD) is disordered. Mn(2+) contacts are provided by Asp550 and Asp613.

It belongs to the PP2C family. Mg(2+) is required as a cofactor. Requires Mn(2+) as cofactor.

It catalyses the reaction O-phospho-L-seryl-[protein] + H2O = L-seryl-[protein] + phosphate. The catalysed reaction is O-phospho-L-threonyl-[protein] + H2O = L-threonyl-[protein] + phosphate. This Oryza sativa subsp. japonica (Rice) protein is Probable protein phosphatase 2C 31.